The chain runs to 177 residues: Chorismate pyruvate-lyase (177 aa).

M36, R78, L116, and E157 together coordinate substrate.

This sequence belongs to the UbiC family. In terms of assembly, monomer.

It is found in the cytoplasm. It catalyses the reaction chorismate = 4-hydroxybenzoate + pyruvate. It functions in the pathway cofactor biosynthesis; ubiquinone biosynthesis. Removes the pyruvyl group from chorismate, with concomitant aromatization of the ring, to provide 4-hydroxybenzoate (4HB) for the ubiquinone pathway. This is Chorismate pyruvate-lyase from Pectobacterium atrosepticum (strain SCRI 1043 / ATCC BAA-672) (Erwinia carotovora subsp. atroseptica).